The following is a 417-amino-acid chain: V-set and immunoglobulin domain-containing protein 8 (417 aa).

A signal peptide spans 1 to 21; that stretch reads MGVRGALHLLLVCLSPALLSA. Ig-like V-type domains lie at 22–140 and 145–256; these read VRIN…VIVT and PAVP…VKVS. Topologically, residues 22-262 are extracellular; it reads VRINGDGQEV…VKVSDSQRVG (241 aa). Intrachain disulfides connect cysteine 44–cysteine 125 and cysteine 166–cysteine 238. Residues 263–283 form a helical membrane-spanning segment; it reads MIVGAVLGSLLMLACLALGIW. Topologically, residues 284 to 417 are cytoplasmic; the sequence is GLICCCCGGG…QRSCKDGLLV (134 aa).

Its subcellular location is the membrane. In Mus musculus (Mouse), this protein is V-set and immunoglobulin domain-containing protein 8 (Vsig8).